The primary structure comprises 551 residues: Inosine-5'-monophosphate dehydrogenase (551 aa).

CBS domains are found at residues 102–163 (FILD…PLSE) and 165–221 (MTSD…PLAS). NAD(+) is bound by residues 258 to 260 (DSS) and 308 to 310 (GMG). K(+)-binding residues include Gly-310 and Gly-312. Ser-313 contributes to the IMP binding site. Cys-315 provides a ligand contact to K(+). Cys-315 functions as the Thioimidate intermediate in the catalytic mechanism. Residues 349–351 (DGG), 372–373 (GS), and 396–400 (YRGMG) contribute to the IMP site. Residues 407-462 (AGTRRTASPPARGLRSPEASPSTAASSGGASRASALSEASPSAKSEASRTSTSTGS) are disordered. Low complexity predominate over residues 422-462 (SPEASPSTAASSGGASRASALSEASPSAKSEASRTSTSTGS). The Proton acceptor role is filled by Arg-465. Gln-477 is a binding site for IMP. Positions 536 and 537 each coordinate K(+).

This sequence belongs to the IMPDH/GMPR family. In terms of assembly, homotetramer. Requires K(+) as cofactor.

It is found in the cytoplasm. The enzyme catalyses IMP + NAD(+) + H2O = XMP + NADH + H(+). It participates in purine metabolism; XMP biosynthesis via de novo pathway; XMP from IMP: step 1/1. Mycophenolic acid (MPA) is a non-competitive inhibitor that prevents formation of the closed enzyme conformation by binding to the same site as the amobile flap. In contrast, mizoribine monophosphate (MZP) is a competitive inhibitor that induces the closed conformation. MPA is a potent inhibitor of mammalian IMPDHs but a poor inhibitor of the bacterial enzymes. MZP is a more potent inhibitor of bacterial IMPDH. Potently inhibited by MPA and adenine dinucleotide analogs such as thiazole-4-carboxamide adenine dinucleotide (TAD). Its function is as follows. Catalyzes the conversion of inosine 5'-phosphate (IMP) to xanthosine 5'-phosphate (XMP), the first committed and rate-limiting step in the de novo synthesis of guanine nucleotides, and therefore plays an important role in the regulation of cell growth. In Toxoplasma gondii, this protein is Inosine-5'-monophosphate dehydrogenase.